A 356-amino-acid chain; its full sequence is Butyrate kinase (356 aa).

The protein belongs to the acetokinase family.

The protein resides in the cytoplasm. It catalyses the reaction butanoate + ATP = butanoyl phosphate + ADP. Its pathway is lipid metabolism; butanoate metabolism. Its function is as follows. Catalyzes the conversion of butyryl-CoA through butyryl phosphate to butyrate. This Clostridium perfringens (strain 13 / Type A) protein is Butyrate kinase (buk).